The primary structure comprises 261 residues: Undecaprenyl-diphosphatase (261 aa).

Helical transmembrane passes span 38-58 (RSDF…TFVF), 75-95 (RDYV…GLAV), 106-126 (IQPI…AESV), 136-156 (VTWS…VFPG), 181-201 (FSFL…CFEL), 217-237 (VAFV…LGYI), and 241-261 (SFAP…TWLT).

The protein belongs to the UppP family.

It is found in the cell inner membrane. It catalyses the reaction di-trans,octa-cis-undecaprenyl diphosphate + H2O = di-trans,octa-cis-undecaprenyl phosphate + phosphate + H(+). Its function is as follows. Catalyzes the dephosphorylation of undecaprenyl diphosphate (UPP). Confers resistance to bacitracin. This Xylella fastidiosa (strain 9a5c) protein is Undecaprenyl-diphosphatase.